Here is a 191-residue protein sequence, read N- to C-terminus: CASP-like protein 1D1 (191 aa).

Residues 1–22 are Cytoplasmic-facing; it reads MTSTSKDTPESGYAVPPPNLFG. The helical transmembrane segment at 23–43 threads the bilayer; that stretch reads VDFGLRLLLLASAVSALVVLV. Residues 44 to 73 lie on the Extracellular side of the membrane; sequence TSKQTESIPTSLPPPFPAFISRDAKFQHSP. A helical membrane pass occupies residues 74–94; sequence AFIYLLVALSVTCFYSIITMV. Residues 95 to 118 are Cytoplasmic-facing; that stretch reads ASFAAITSPSSSPRMLFHLVLSDA. The helical transmembrane segment at 119 to 139 threads the bilayer; the sequence is VMAGVMASAAGTAGSVAYLGL. Over 140-160 the chain is Extracellular; that stretch reads KGNSHVNWNKVCNVYDKFCRH. A helical membrane pass occupies residues 161–181; sequence VGSSAAVSLVASVLLVSLVVL. The Cytoplasmic segment spans residues 182 to 191; it reads SSYSLYRRCR.

The protein belongs to the Casparian strip membrane proteins (CASP) family. As to quaternary structure, homodimer and heterodimers.

It is found in the cell membrane. The chain is CASP-like protein 1D1 from Musa acuminata (Banana).